The primary structure comprises 208 residues: Putative dioxygenase RT0384 (208 aa).

This sequence belongs to the intradiol ring-cleavage dioxygenase family.

The polypeptide is Putative dioxygenase RT0384 (Rickettsia typhi (strain ATCC VR-144 / Wilmington)).